A 325-amino-acid chain; its full sequence is Probable arylamine N-acetyltransferase 1 (325 aa).

Catalysis depends on cysteine 72, which acts as the Acyl-thioester intermediate. Active-site residues include histidine 112 and aspartate 127.

Belongs to the arylamine N-acetyltransferase family.

It carries out the reaction an arylamine + acetyl-CoA = an N-acetylarylamine + CoA. The polypeptide is Probable arylamine N-acetyltransferase 1 (Dictyostelium discoideum (Social amoeba)).